The sequence spans 192 residues: Elongation factor P (192 aa).

The protein belongs to the elongation factor P family.

The protein resides in the cytoplasm. It participates in protein biosynthesis; polypeptide chain elongation. Its function is as follows. Involved in peptide bond synthesis. Stimulates efficient translation and peptide-bond synthesis on native or reconstituted 70S ribosomes in vitro. Probably functions indirectly by altering the affinity of the ribosome for aminoacyl-tRNA, thus increasing their reactivity as acceptors for peptidyl transferase. The polypeptide is Elongation factor P (Borreliella afzelii (strain PKo) (Borrelia afzelii)).